The sequence spans 1334 residues: Lysine-specific demethylase 3A-B (1334 aa).

Disordered regions lie at residues 243–288, 352–382, and 514–533; these read DQND…KTSF, PGIQ…SQNL, and KPQE…VTYP. Positions 267 to 283 are enriched in basic and acidic residues; it reads TEVKQTRNEEVPSKDVT. Residues 684-709 form a C6-type zinc finger; the sequence is CDACDTTIFNLHWVCPKCGFGVCVDC. The short motif at 897–901 is the LXXLL motif element; the sequence is LRNLL. Residues 1089-1294 form the JmjC domain; that stretch reads RREGKLNLAA…HCFCLTQEFR (206 aa). The Fe cation site is built by histidine 1133, aspartate 1135, and histidine 1262.

The protein belongs to the JHDM2 histone demethylase family. The cofactor is Fe(2+).

It localises to the cytoplasm. Its subcellular location is the nucleus. It catalyses the reaction N(6),N(6)-dimethyl-L-lysyl(9)-[histone H3] + 2 2-oxoglutarate + 2 O2 = L-lysyl(9)-[histone H3] + 2 formaldehyde + 2 succinate + 2 CO2. Functionally, histone demethylase that specifically demethylates 'Lys-9' of histone H3, thereby playing a central role in histone code. Preferentially demethylates mono- and dimethylated H3 'Lys-9' residue, with a preference for dimethylated residue, while it has weak or no activity on trimethylated H3 'Lys-9'. Demethylation of Lys residue generates formaldehyde and succinate. This chain is Lysine-specific demethylase 3A-B (kdm3a-b), found in Xenopus laevis (African clawed frog).